The following is a 170-amino-acid chain: Phosphopantetheine adenylyltransferase (170 aa).

Threonine 18 is a substrate binding site. Residues 18–19 (TF) and histidine 26 contribute to the ATP site. Substrate-binding residues include lysine 50, leucine 84, and arginine 98. Residues 99-101 (GLR), glutamate 109, and 134-140 (WIYISSS) each bind ATP.

Belongs to the bacterial CoaD family. Homohexamer. Mg(2+) is required as a cofactor.

It localises to the cytoplasm. It catalyses the reaction (R)-4'-phosphopantetheine + ATP + H(+) = 3'-dephospho-CoA + diphosphate. It functions in the pathway cofactor biosynthesis; coenzyme A biosynthesis; CoA from (R)-pantothenate: step 4/5. In terms of biological role, reversibly transfers an adenylyl group from ATP to 4'-phosphopantetheine, yielding dephospho-CoA (dPCoA) and pyrophosphate. This is Phosphopantetheine adenylyltransferase from Desulfotalea psychrophila (strain LSv54 / DSM 12343).